Here is an 847-residue protein sequence, read N- to C-terminus: B-cell receptor CD22 (847 aa).

Positions 1–19 (MHLLGPWLLLLVLEYLAFC) are cleaved as a signal peptide. The Ig-like V-type domain occupies 20–138 (DSSKWAFEHP…MERIHLNVSE (119 aa)). Over 20–687 (DSSKWAFEHP…YYSPETIGRR (668 aa)) the chain is Extracellular. N-linked (GlcNAc...) asparagine glycans are attached at residues Asn67, Asn101, and Asn112. Arg120 is an N-acetylneuraminate binding site. 9 N-linked (GlcNAc...) asparagine glycosylation sites follow: Asn135, Asn164, Asn231, Asn295, Asn363, Asn428, Asn445, Asn448, and Asn479. 6 Ig-like C2-type domains span residues 143–235 (PHIQ…DTVQ), 242–324 (PKLE…AEVF), 331–416 (PEPS…LDVQ), 419–500 (PKKV…VALN), 505–582 (PRDV…QTAS), and 593–676 (PRRL…STLN). Cys161 and Cys219 are oxidised to a cystine. 2 cysteine pairs are disulfide-bonded: Cys265–Cys309 and Cys353–Cys396. 2 disulfide bridges follow: Cys442–Cys484 and Cys529–Cys571. N-linked (GlcNAc...) asparagine glycosylation is found at Asn574 and Asn634. A disulfide bridge connects residues Cys616 and Cys659. A helical membrane pass occupies residues 688–708 (VAVGLGSCLAILILAICGLKL). Over 709–847 (QRRWKRTQSQ…ENVDYVILKH (139 aa)) the chain is Cytoplasmic. Ser725, Ser726, and Ser729 each carry phosphoserine. 2 consecutive short sequence motifs (ITIM motif) follow at residues 760-765 (ISYTTL) and 794-799 (VTYSVL). Phosphotyrosine is present on Tyr762. Residues Tyr807, Tyr822, and Tyr842 each carry the phosphotyrosine modification. 2 consecutive short sequence motifs (ITIM motif) follow at residues 820-825 (IHYSEL) and 840-845 (VDYVIL).

It belongs to the immunoglobulin superfamily. SIGLEC (sialic acid binding Ig-like lectin) family. As to quaternary structure, predominantly monomer of isoform CD22-beta. Also found as heterodimer of isoform CD22-beta and a shorter isoform. Interacts with PTPN6/SHP-1, LYN, SYK, PIK3R1/PIK3R2 and PLCG1 upon phosphorylation. Interacts with GRB2, INPP5D and SHC1 upon phosphorylation. May form a complex with INPP5D/SHIP, GRB2 and SHC1. In terms of processing, phosphorylation of Tyr-762, Tyr-807 and Tyr-822 are involved in binding to SYK, GRB2 and SYK, respectively. Phosphorylation of Tyr-842 is involved in binding to SYK, PLCG2 and PIK3R1/PIK3R2. Phosphorylated on tyrosine residues by LYN.

The protein resides in the cell membrane. Functionally, most highly expressed siglec (sialic acid-binding immunoglobulin-like lectin) on B-cells that plays a role in various aspects of B-cell biology including differentiation, antigen presentation, and trafficking to bone marrow. Binds to alpha 2,6-linked sialic acid residues of surface molecules such as CD22 itself, CD45 and IgM in a cis configuration. Can also bind to ligands on other cells as an adhesion molecule in a trans configuration. Acts as an inhibitory coreceptor on the surface of B-cells and inhibits B-cell receptor induced signaling, characterized by inhibition of the calcium mobilization and cellular activation. Mechanistically, the immunoreceptor tyrosine-based inhibitory motif domain is phosphorylated by the Src kinase LYN, which in turn leads to the recruitment of the protein tyrosine phosphatase 1/PTPN6, leading to the negative regulation of BCR signaling. If this negative signaling from is of sufficient strength, apoptosis of the B-cell can be induced. In Gorilla gorilla gorilla (Western lowland gorilla), this protein is B-cell receptor CD22.